Reading from the N-terminus, the 138-residue chain is uncharacterized protein (138 aa).

3 consecutive transmembrane segments (helical) span residues 12-32, 62-82, and 111-131; these read LHFL…VLPI, LIAV…FSVL, and FHWV…LICS.

Its subcellular location is the cell membrane. This is an uncharacterized protein from Haemophilus influenzae (strain ATCC 51907 / DSM 11121 / KW20 / Rd).